An 862-amino-acid polypeptide reads, in one-letter code: Linoleate 9S-lipoxygenase 1 (862 aa).

Positions 34–161 (NDFGATIIDG…NYRYSRVFFA (128 aa)) constitute a PLAT domain. Positions 164–862 (TYLPSQMPAA…AKGIPNSISI (699 aa)) constitute a Lipoxygenase domain. Residues 212–241 (GRPILGGNSDHPYPRRGRTERKPNASDPSL) are disordered. 5 residues coordinate Fe cation: His-517, His-522, His-708, Asn-712, and Ile-862.

The protein belongs to the lipoxygenase family. In terms of assembly, monomer. Requires Fe cation as cofactor.

The catalysed reaction is (9Z,12Z)-octadecadienoate + O2 = (9S)-hydroperoxy-(10E,12Z)-octadecadienoate. Its pathway is lipid metabolism; oxylipin biosynthesis. Plant lipoxygenase may be involved in a number of diverse aspects of plant physiology including growth and development, pest resistance, and senescence or responses to wounding. It catalyzes the hydroperoxidation of lipids containing a cis,cis-1,4-pentadiene structure. This Hordeum vulgare (Barley) protein is Linoleate 9S-lipoxygenase 1 (LOX1.1).